Reading from the N-terminus, the 188-residue chain is MIVGVRGVLVSKEPSFVHVDVGGVVYEVFISLQSFSALSGNEVKLFTSHVIREDAQLLYGFLELGEKKLFERLIKINGVGPKVAMAICSTYTPSQFAVVLNNKDITAVQRVPGIGPKSAGRILVELSGFDTELIISASEPKSLAVAQASEALESLGFKKDKISKALGSCSAVDTAILVKEALKLLQTI.

The interval M1–L62 is domain I. The domain II stretch occupies residues E63–I135. A flexible linker region spans residues I135–E139. Residues P140–I188 are domain III.

It belongs to the RuvA family. Homotetramer. Forms an RuvA(8)-RuvB(12)-Holliday junction (HJ) complex. HJ DNA is sandwiched between 2 RuvA tetramers; dsDNA enters through RuvA and exits via RuvB. An RuvB hexamer assembles on each DNA strand where it exits the tetramer. Each RuvB hexamer is contacted by two RuvA subunits (via domain III) on 2 adjacent RuvB subunits; this complex drives branch migration. In the full resolvosome a probable DNA-RuvA(4)-RuvB(12)-RuvC(2) complex forms which resolves the HJ.

The protein localises to the cytoplasm. The RuvA-RuvB-RuvC complex processes Holliday junction (HJ) DNA during genetic recombination and DNA repair, while the RuvA-RuvB complex plays an important role in the rescue of blocked DNA replication forks via replication fork reversal (RFR). RuvA specifically binds to HJ cruciform DNA, conferring on it an open structure. The RuvB hexamer acts as an ATP-dependent pump, pulling dsDNA into and through the RuvAB complex. HJ branch migration allows RuvC to scan DNA until it finds its consensus sequence, where it cleaves and resolves the cruciform DNA. The polypeptide is Holliday junction branch migration complex subunit RuvA (Sulfurimonas denitrificans (strain ATCC 33889 / DSM 1251) (Thiomicrospira denitrificans (strain ATCC 33889 / DSM 1251))).